The sequence spans 239 residues: 7-cyano-7-deazaguanine synthase (239 aa).

13–23 (FSGGQDSTTCL) provides a ligand contact to ATP. Cys192, Cys201, Cys204, and Cys207 together coordinate Zn(2+).

This sequence belongs to the QueC family. It depends on Zn(2+) as a cofactor.

The enzyme catalyses 7-carboxy-7-deazaguanine + NH4(+) + ATP = 7-cyano-7-deazaguanine + ADP + phosphate + H2O + H(+). It participates in purine metabolism; 7-cyano-7-deazaguanine biosynthesis. Functionally, catalyzes the ATP-dependent conversion of 7-carboxy-7-deazaguanine (CDG) to 7-cyano-7-deazaguanine (preQ(0)). The protein is 7-cyano-7-deazaguanine synthase of Shewanella sp. (strain MR-7).